Reading from the N-terminus, the 955-residue chain is UvrABC system protein A (955 aa).

35 to 42 (GLSGSGKS) is a binding site for ATP. 2 ABC transporter domains span residues 322–601 (WGST…EESI) and 621–951 (GHDN…RYLK). Position 654-661 (654-661 (GVSGSGKS)) interacts with ATP. The C4-type zinc finger occupies 754–780 (CEACQGDGLIKIEMHFLPDVYVKCDIC).

This sequence belongs to the ABC transporter superfamily. UvrA family. As to quaternary structure, forms a heterotetramer with UvrB during the search for lesions.

It is found in the cytoplasm. The UvrABC repair system catalyzes the recognition and processing of DNA lesions. UvrA is an ATPase and a DNA-binding protein. A damage recognition complex composed of 2 UvrA and 2 UvrB subunits scans DNA for abnormalities. When the presence of a lesion has been verified by UvrB, the UvrA molecules dissociate. In Rickettsia conorii (strain ATCC VR-613 / Malish 7), this protein is UvrABC system protein A.